The chain runs to 263 residues: MGAIQARLPLFLSPPSIKHHTFLHSSSSNSNFKIRSNKSSSSSSSSIIMASIKVHGVPMSTATMRVLATLYEKDLQFELIPVDMRAGAHKQEAHLALNPFGQIPALEDGDLTLFESRAITQYLAEEYSEKGEKLISQDCKKVKATTNVWLQVEGQQFDPNASKLAFERVFKGMFGMTTDPAAVQELEGKLQKVLDVYEARLAKSEFLAGDSFTLADLHHLPAIHYLLGTDSKVLFDSRPKVSEWIKKISARPAWAKVIDLQKQ.

The N-terminal 49 residues, 1–49, are a transit peptide targeting the chloroplast; it reads MGAIQARLPLFLSPPSIKHHTFLHSSSSNSNFKIRSNKSSSSSSSSIIM. One can recognise a GST N-terminal domain in the interval 50-131; sequence ASIKVHGVPM…YLAEEYSEKG (82 aa). Glutathione contacts are provided by residues 60 to 61, 89 to 90, 102 to 103, and 115 to 116; these read ST, HK, QI, and ES. A GST C-terminal domain is found at 139-263; sequence CKKVKATTNV…WAKVIDLQKQ (125 aa). At Thr177 the chain carries Phosphothreonine.

Belongs to the GST superfamily. Phi family. In terms of tissue distribution, isoform 1 is predominantly expressed in leaves and isoform 2 in roots.

It localises to the plastid. The protein localises to the chloroplast. It is found in the cytoplasm. The protein resides in the cytosol. It carries out the reaction RX + glutathione = an S-substituted glutathione + a halide anion + H(+). Its function is as follows. In vitro, possesses glutathione S-transferase activity toward 1-chloro-2,4-dinitrobenzene (CDNB) and glutathione peroxidase activity toward cumene hydroperoxide and linoleic acid-13-hydroperoxide. May be involved in the conjugation of reduced glutathione to a wide number of exogenous and endogenous hydrophobic electrophiles and have a detoxification role against certain herbicides. The polypeptide is Glutathione S-transferase F8, chloroplastic (GSTF8) (Arabidopsis thaliana (Mouse-ear cress)).